The sequence spans 520 residues: Hydroxymethylglutaryl-CoA synthase, cytoplasmic (520 aa).

Phosphoserine is present on Ser4. The (3S)-3-hydroxy-3-methylglutaryl-CoA site is built by Asp43 and Ala44. 44–46 (AGK) lines the CoA pocket. Lys46 is modified (N6-acetyllysine). Glu95 serves as the catalytic Proton donor/acceptor. 5 residues coordinate (3S)-3-hydroxy-3-methylglutaryl-CoA: Cys129, Asn167, Thr171, Ser221, and His264. Catalysis depends on Cys129, which acts as the Acyl-thioester intermediate. Residue Asn167 coordinates CoA. Residue Ser221 coordinates CoA. His264 serves as the catalytic Proton donor/acceptor. 2 residues coordinate CoA: Lys269 and Lys273. Positions 273, 343, and 377 each coordinate (3S)-3-hydroxy-3-methylglutaryl-CoA. Position 273 is an N6-acetyllysine (Lys273). Thr476 is modified (phosphothreonine). The disordered stretch occupies residues 492 to 520 (HIPSPAKKVPRLPATAAEPEAAVISNGEH). Residues Ser495 and Ser516 each carry the phosphoserine modification.

This sequence belongs to the thiolase-like superfamily. HMG-CoA synthase family. Homodimer.

It is found in the cytoplasm. It catalyses the reaction acetoacetyl-CoA + acetyl-CoA + H2O = (3S)-3-hydroxy-3-methylglutaryl-CoA + CoA + H(+). The protein operates within metabolic intermediate biosynthesis; (R)-mevalonate biosynthesis; (R)-mevalonate from acetyl-CoA: step 2/3. Catalyzes the condensation of acetyl-CoA with acetoacetyl-CoA to form HMG-CoA, which is converted by HMG-CoA reductase (HMGCR) into mevalonate, a precursor for cholesterol synthesis. The protein is Hydroxymethylglutaryl-CoA synthase, cytoplasmic of Homo sapiens (Human).